A 449-amino-acid polypeptide reads, in one-letter code: Na(+)-translocating NADH-quinone reductase subunit A (449 aa).

The protein belongs to the NqrA family. As to quaternary structure, composed of six subunits; NqrA, NqrB, NqrC, NqrD, NqrE and NqrF.

The enzyme catalyses a ubiquinone + n Na(+)(in) + NADH + H(+) = a ubiquinol + n Na(+)(out) + NAD(+). NQR complex catalyzes the reduction of ubiquinone-1 to ubiquinol by two successive reactions, coupled with the transport of Na(+) ions from the cytoplasm to the periplasm. NqrA to NqrE are probably involved in the second step, the conversion of ubisemiquinone to ubiquinol. In Serratia proteamaculans (strain 568), this protein is Na(+)-translocating NADH-quinone reductase subunit A.